A 316-amino-acid chain; its full sequence is uncharacterized protein (316 aa).

The S4 RNA-binding domain maps to 16 to 89; the sequence is ERLDKFLARA…IPINIIYEDE (74 aa). Residue Asp140 is part of the active site.

This sequence belongs to the pseudouridine synthase RluA family.

The enzyme catalyses a uridine in RNA = a pseudouridine in RNA. This is an uncharacterized protein from Aquifex aeolicus (strain VF5).